A 136-amino-acid chain; its full sequence is SPbeta prophage-derived uncharacterized protein YonI (136 aa).

The sequence is that of SPbeta prophage-derived uncharacterized protein YonI (yonI) from Bacillus subtilis (strain 168).